Consider the following 140-residue polypeptide: Large ribosomal subunit protein uL15 (140 aa).

The disordered stretch occupies residues 1–31 (MDTKKFRGSRTCGGGTHKNRRGAGNRGGRGK).

This sequence belongs to the universal ribosomal protein uL15 family. As to quaternary structure, part of the 50S ribosomal subunit.

Binds to the 23S rRNA. The polypeptide is Large ribosomal subunit protein uL15 (Methanosarcina barkeri (strain Fusaro / DSM 804)).